Here is a 342-residue protein sequence, read N- to C-terminus: L-threonine 3-dehydrogenase (342 aa).

Residue Cys38 coordinates Zn(2+). Residues Thr40 and His43 each act as charge relay system in the active site. Positions 63, 64, 93, 96, 99, and 107 each coordinate Zn(2+). Residues Ile175, Asp195, Arg200, 262–264 (LGL), and 286–287 (IY) contribute to the NAD(+) site.

It belongs to the zinc-containing alcohol dehydrogenase family. As to quaternary structure, homotetramer. The cofactor is Zn(2+).

It is found in the cytoplasm. It catalyses the reaction L-threonine + NAD(+) = (2S)-2-amino-3-oxobutanoate + NADH + H(+). It functions in the pathway amino-acid degradation; L-threonine degradation via oxydo-reductase pathway; glycine from L-threonine: step 1/2. Functionally, catalyzes the NAD(+)-dependent oxidation of L-threonine to 2-amino-3-ketobutyrate. The polypeptide is L-threonine 3-dehydrogenase (Streptomyces coelicolor (strain ATCC BAA-471 / A3(2) / M145)).